A 480-amino-acid polypeptide reads, in one-letter code: Cytochrome P450 monooxygenase ORF11 (480 aa).

The helical transmembrane segment at 9–29 (LLLLPHLSALTPKTGFLIGLA) threads the bilayer. N-linked (GlcNAc...) asparagine glycosylation is found at asparagine 265 and asparagine 352. Cysteine 449 serves as a coordination point for heme.

Belongs to the cytochrome P450 family. Heme is required as a cofactor.

The protein localises to the membrane. It participates in sesquiterpene biosynthesis. In terms of biological role, cytochrome P450 monooxygenase; part of the gene cluster that mediates the biosynthesis of PR-toxin, a bicyclic sesquiterpene belonging to the eremophilane class and acting as a mycotoxin. The first step of the pathway is catalyzed by the aristolochene synthase which performs the cyclization of trans,trans-farnesyl diphosphate (FPP) to the bicyclic sesquiterpene aristolochene. Following the formation of aristolochene, the non-oxygenated aristolochene is converted to the trioxygenated intermediate eremofortin B, via 7-epi-neopetasone. This conversion appears to involve three enzymes, a hydroxysterol oxidase-like enzyme, the quinone-oxidase prx3 that forms the quinone-type-structure in the bicyclic nucleus of aristolochene with the C8-oxo group and the C-3 hydroxyl group, and the P450 monooxygenase ORF6 that introduces the epoxide at the double bond between carbons 1 and 2. No monoxy or dioxy-intermediates have been reported to be released to the broth, so these three early oxidative reactions may be coupled together. Eremofortin B is further oxidized by another P450 monooxygenase, that introduces a second epoxide between carbons 7 and 11 prior to acetylation to eremofortin A by the acetyltransferase ORF8. The second epoxidation may be performed by a second P450 monooxygenase. After the acetylation step, eremofortin A is converted to eremofortin C and then to PR-toxin. First the conversion of eremofortin A to eremofortin C proceeds by oxidation of the side chain of the molecule at C-12 and is catalyzed by the short-chain oxidoreductase prx1. The cytochrome P450 monooxygenase ORF6 is probably also involved in this step. The primary alcohol formed at C-12 is finally oxidized by the short-chain alcohol dehydrogenase prx4 that forms PR-toxin. The polypeptide is Cytochrome P450 monooxygenase ORF11 (Penicillium roqueforti (strain FM164)).